The sequence spans 342 residues: tRNA N6-adenosine threonylcarbamoyltransferase (342 aa).

2 residues coordinate Fe cation: His-119 and His-123. Substrate is bound by residues 142–146, Asp-175, Gly-188, and Asn-282; that span reads VVSGG. A Fe cation-binding site is contributed by Asp-310.

It belongs to the KAE1 / TsaD family. Fe(2+) is required as a cofactor.

Its subcellular location is the cytoplasm. The catalysed reaction is L-threonylcarbamoyladenylate + adenosine(37) in tRNA = N(6)-L-threonylcarbamoyladenosine(37) in tRNA + AMP + H(+). Functionally, required for the formation of a threonylcarbamoyl group on adenosine at position 37 (t(6)A37) in tRNAs that read codons beginning with adenine. Is involved in the transfer of the threonylcarbamoyl moiety of threonylcarbamoyl-AMP (TC-AMP) to the N6 group of A37, together with TsaE and TsaB. TsaD likely plays a direct catalytic role in this reaction. This is tRNA N6-adenosine threonylcarbamoyltransferase from Moorella thermoacetica (strain ATCC 39073 / JCM 9320).